A 432-amino-acid chain; its full sequence is CLOCK-interacting pacemaker (432 aa).

2 disordered regions span residues 71 to 98 (ADSDKDSGFSDGSSECLSSAEQMESEDM) and 194 to 315 (SYTK…SSPL). Position 246 is a phosphoserine (S246). The segment covering 272–283 (SPQTLQPVSSSH) has biased composition (polar residues). Residues 364 to 395 (EITLKTKELIRQNQATQAELDQLKEQTQMFIE) adopt a coiled-coil conformation. Positions 408–432 (LQASLTSGSSHSGSDLDTLSDHPDV) are disordered. Positions 411 to 424 (SLTSGSSHSGSDLD) are enriched in low complexity.

As to quaternary structure, interacts with CLOCK. Forms a ternary complex with the CLOCK-BMAL1 heterodimer. Interacts with CAD and HSPA5. Expressed in the heart, kidney and liver and shows a circadian oscillation in these tissues with a peak at circadian time 14 hours (at protein level). Expressed in the brain, including the suprachiasmatic nucleus (SCN) of the brain, and in multiple peripheral tissues such as heart, liver and kidney. Exhibits a circadian oscillation in the peripheral tissues with a peak at circadian time 14 hours.

The protein localises to the nucleus. The protein resides in the cytoplasm. Its subcellular location is the cytosol. In terms of biological role, transcriptional repressor which may act as a negative-feedback regulator of CLOCK-BMAL1 transcriptional activity in the circadian-clock mechanism. May stimulate BMAL1-dependent phosphorylation of CLOCK. However, the physiological relevance of these observations is unsure, since experiments in knockout mice showed that CIPC is not critially required for basic circadian clock. The protein is CLOCK-interacting pacemaker (Cipc) of Mus musculus (Mouse).